The chain runs to 441 residues: Protein FAM83A (441 aa).

Disordered regions lie at residues 81–108 (SNDN…MNSD) and 312–368 (GMSI…SPLQ). A compositionally biased stretch (polar residues) spans 314–327 (SIMSDSNPESINTT). Residues 328 to 354 (SEPFSSISTASISNDSQRPKSPVSTTP) are compositionally biased toward low complexity.

This sequence belongs to the FAM83 family.

It is found in the cytoplasm. Functionally, may function in the epidermal growth factor receptor/EGFR signaling pathway. This chain is Protein FAM83A, found in Xenopus tropicalis (Western clawed frog).